We begin with the raw amino-acid sequence, 1286 residues long: ABC transporter B family member 4 (1286 aa).

The interval 1–39 (MASESGLNGDPNILEEVSETKRDKEEEEEVKKTEKKDEE) is disordered. The span at 18–39 (SETKRDKEEEEEVKKTEKKDEE) shows a compositional bias: basic and acidic residues. A helical membrane pass occupies residues 60-80 (FLLMILGTLGSIGNGLGFPLM). An ABC transmembrane type-1 1 domain is found at 63–349 (MILGTLGSIG…TSPCLSAFAA (287 aa)). N-linked (GlcNAc...) asparagine glycans are attached at residues asparagine 94 and asparagine 97. Helical transmembrane passes span 109 to 129 (FVWL…GWMI), 186 to 206 (IQLL…GWLL), 208 to 228 (LVML…AIVI), 288 to 308 (GLGL…AVWY), and 317 to 337 (GYTG…SMSL). The ABC transporter 1 domain maps to 384–620 (IELKDVYFTY…PEGAYSQLIR (237 aa)). Position 419–426 (419–426 (GQSGSGKS)) interacts with ATP. 2 N-linked (GlcNAc...) asparagine glycosylation sites follow: asparagine 500 and asparagine 571. Residues 625 to 636 (KKSDENAAEEQK) show a composition bias toward basic and acidic residues. The interval 625–669 (KKSDENAAEEQKMSSIESFKQSSLRKSSLGRSLSKGGSSRGNSSR) is disordered. A compositionally biased stretch (low complexity) spans 646–669 (SSLRKSSLGRSLSKGGSSRGNSSR). Asparagine 666 carries an N-linked (GlcNAc...) asparagine glycan. A Phosphoserine modification is found at serine 671. An ABC transmembrane type-1 2 domain is found at 720 to 1007 (LILGSISAAA…SSSLSPDSSK (288 aa)). The next 2 helical transmembrane spans lie at 721 to 741 (ILGS…GILI) and 764 to 784 (IIFM…TFFF). Residues asparagine 816 and asparagine 846 are each glycosylated (N-linked (GlcNAc...) asparagine). 4 helical membrane-spanning segments follow: residues 850 to 870 (ILAG…VVLA), 871 to 891 (MLPL…GFSA), 942 to 962 (GIVS…SYAA), and 976 to 996 (TTFD…MAIS). The ABC transporter 2 domain maps to 1042–1279 (IELRHVSFKY…KDGVYASLVQ (238 aa)). Position 1077-1084 (1077-1084 (GESGSGKS)) interacts with ATP. Asparagine 1131 and asparagine 1230 each carry an N-linked (GlcNAc...) asparagine glycan.

Belongs to the ABC transporter superfamily. ABCB family. Multidrug resistance exporter (TC 3.A.1.201) subfamily. In terms of assembly, interacts with 1-naphthylphthalamic acid (NPA). In terms of processing, phosphorylation level varies significantly during early response to bacterial elicitor. As to expression, mostly expressed in roots, especially in the root elongation zone and lateral roots. In mature portion of the root, expressed in the epidermis and cortex. In the root elongation zone, confined to epidermis. In root tips, present in the root cap, S3 columella and epidermal cells.

It localises to the cell membrane. In terms of biological role, auxin influx transporter that mediates the transport of auxin in roots. Contributes to the basipetal transport in hypocotyls and root tips by establishing an auxin uptake sink in the root cap. Confers sensitivity to 1-N-naphthylphthalamic acid (NPA). Regulates the root elongation, the initiation of lateral roots and the development of root hairs. Can transport IAA, indole-3-propionic acid, NPA syringic acid, vanillic acid and some auxin metabolites, but not 2,4-D and 1-naphthaleneacetic acid. The sequence is that of ABC transporter B family member 4 (ABCB4) from Arabidopsis thaliana (Mouse-ear cress).